A 394-amino-acid polypeptide reads, in one-letter code: Elongation factor Tu (394 aa).

Residues 10 to 204 (KEHANIGTIG…AVDDYIPTPE (195 aa)) enclose the tr-type G domain. The G1 stretch occupies residues 19–26 (GHVDHGKT). 19-26 (GHVDHGKT) lines the GTP pocket. Thr26 lines the Mg(2+) pocket. The segment at 60-64 (GITIN) is G2. The segment at 81-84 (DCPG) is G3. GTP contacts are provided by residues 81-85 (DCPGH) and 136-139 (NKVD). A G4 region spans residues 136-139 (NKVD). A G5 region spans residues 174–176 (SAL).

This sequence belongs to the TRAFAC class translation factor GTPase superfamily. Classic translation factor GTPase family. EF-Tu/EF-1A subfamily. As to quaternary structure, monomer.

It is found in the cytoplasm. It catalyses the reaction GTP + H2O = GDP + phosphate + H(+). In terms of biological role, GTP hydrolase that promotes the GTP-dependent binding of aminoacyl-tRNA to the A-site of ribosomes during protein biosynthesis. This is Elongation factor Tu from Staphylococcus epidermidis (strain ATCC 35984 / DSM 28319 / BCRC 17069 / CCUG 31568 / BM 3577 / RP62A).